A 198-amino-acid chain; its full sequence is Dynactin subunit 5 (198 aa).

The span at 179–188 (NTPASKGLPS) shows a compositional bias: polar residues. Residues 179-198 (NTPASKGLPSTPTKLQTTTT) are disordered. The segment covering 189 to 198 (TPTKLQTTTT) has biased composition (low complexity).

It belongs to the dynactin subunits 5/6 family. Dynactin subunit 5 subfamily. As to quaternary structure, member of the pointed-end complex of the dynactin shoulder complex.

Its subcellular location is the cytoplasm. It localises to the cytoskeleton. The chain is Dynactin subunit 5 (dynE) from Dictyostelium discoideum (Social amoeba).